Reading from the N-terminus, the 161-residue chain is Ribonuclease H (161 aa).

The RNase H type-1 domain maps to 12–155; the sequence is QPQHVVIYTD…ADALANKGVE (144 aa). Mg(2+)-binding residues include aspartate 21, glutamate 59, aspartate 81, and aspartate 147.

The protein belongs to the RNase H family. Monomer. Requires Mg(2+) as cofactor.

Its subcellular location is the cytoplasm. It catalyses the reaction Endonucleolytic cleavage to 5'-phosphomonoester.. Its function is as follows. Endonuclease that specifically degrades the RNA of RNA-DNA hybrids. The sequence is that of Ribonuclease H from Polaromonas naphthalenivorans (strain CJ2).